A 382-amino-acid polypeptide reads, in one-letter code: MIKPNIPAPVRPNLPLSSPDSVLPQAMKDPFNIFDDDEPSEDTSSSEQSSRPPPREMMISSSCALREQTNSSFLNRFFPEDDESSENGAALAEINQLLRDGPEAPPREPTPKEARRPEKMQKIFFQTYGNDFKVEAHGDRLLAQNQRVVRLFERGRILGLGVKMNIPMGYCAVTNCFHPPGCVCVMDMAGYGPSDIRAQIVNISSGPLELPPNMLQIHIHMLPMLLPEPWQTINLMAPHQGDTYFDLRLRRPLSLPPRASKNLKFEAGHLCEEDARRCLVIPCRHLATKRVLLDPTVWRPNSLAVLRVLNASDEHVDLEAGMAMAKIIFTTPGITPFKPSLTSVMMSFDVPRSDLKLVKGGRRDYYRAEERMRSGRDSSNEG.

Pro residues predominate over residues 1 to 12 (MIKPNIPAPVRP). Disordered stretches follow at residues 1–60 (MIKP…MMIS) and 97–118 (LLRD…RRPE). Over residues 100 to 118 (DGPEAPPREPTPKEARRPE) the composition is skewed to basic and acidic residues.

This sequence belongs to the dUTPase family. The cofactor is Mg(2+).

The catalysed reaction is dUTP + H2O = dUMP + diphosphate + H(+). Its pathway is pyrimidine metabolism; dUMP biosynthesis; dUMP from dCTP (dUTP route): step 2/2. Its function is as follows. Involved in nucleotide metabolism: produces dUMP, the immediate precursor of thymidine nucleotides and decreases the intracellular concentration of dUTP to avoid uracil incorporation into viral DNA. This chain is Deoxyuridine 5'-triphosphate nucleotidohydrolase, found in Murid herpesvirus 1 (strain Smith) (MuHV-1).